A 508-amino-acid polypeptide reads, in one-letter code: Putative glycosyl hydrolase ecdF (508 aa).

The first 15 residues, 1 to 15 (MFLHILCLLAGQALA), serve as a signal peptide directing secretion. N-linked (GlcNAc...) asparagine glycosylation is found at Asn-99, Asn-122, Asn-275, and Asn-362.

The protein belongs to the glycosyl hydrolase 32 family.

This chain is Putative glycosyl hydrolase ecdF, found in Aspergillus rugulosus (Emericella rugulosa).